Here is a 253-residue protein sequence, read N- to C-terminus: Peptidase inhibitor R3HDML (253 aa).

The N-terminal stretch at 1-23 (MPLLSSIVGLTGLLLWMGHTVGA) is a signal peptide. Positions 24 to 56 (LRMPNTTLVQGRPKNTAVWPLSGLGVPRHRRKR) are excised as a propeptide. 2 N-linked (GlcNAc...) asparagine glycosylation sites follow: Asn-28 and Asn-120. One can recognise an SCP domain in the interval 67–207 (LDYHNHIRAS…QQAVYLVCNY (141 aa)).

Belongs to the CRISP family.

The protein localises to the secreted. Its function is as follows. Putative serine protease inhibitor. The protein is Peptidase inhibitor R3HDML (R3hdml) of Mus musculus (Mouse).